Reading from the N-terminus, the 300-residue chain is Meiotically up-regulated gene 165 protein (300 aa).

Disordered stretches follow at residues Met1–Ser38 and Thr50–Glu109. The span at Glu21–Ser38 shows a compositional bias: polar residues. The segment covering Ser52 to Ser69 has biased composition (low complexity). Basic residues predominate over residues Thr94–Lys103.

Its subcellular location is the nucleus. Has a role in meiosis. The polypeptide is Meiotically up-regulated gene 165 protein (mug165) (Schizosaccharomyces pombe (strain 972 / ATCC 24843) (Fission yeast)).